Reading from the N-terminus, the 188-residue chain is Elongation factor P 1 (188 aa).

The protein belongs to the elongation factor P family.

It localises to the cytoplasm. The protein operates within protein biosynthesis; polypeptide chain elongation. Involved in peptide bond synthesis. Stimulates efficient translation and peptide-bond synthesis on native or reconstituted 70S ribosomes in vitro. Probably functions indirectly by altering the affinity of the ribosome for aminoacyl-tRNA, thus increasing their reactivity as acceptors for peptidyl transferase. The sequence is that of Elongation factor P 1 from Mesorhizobium japonicum (strain LMG 29417 / CECT 9101 / MAFF 303099) (Mesorhizobium loti (strain MAFF 303099)).